The chain runs to 124 residues: Histone H2A (124 aa).

The span at 1-18 shows a compositional bias: basic residues; that stretch reads MSGRGKSGKARTKAKSRS. Positions 1–21 are disordered; sequence MSGRGKSGKARTKAKSRSSRA. Serine 2 is subject to N-acetylserine. Serine 2 carries the phosphoserine modification. Glutamine 104 carries the post-translational modification N5-methylglutamine. Lysine 119 participates in a covalent cross-link: Glycyl lysine isopeptide (Lys-Gly) (interchain with G-Cter in ubiquitin).

Belongs to the histone H2A family. In terms of assembly, the nucleosome is a histone octamer containing two molecules each of H2A, H2B, H3 and H4 assembled in one H3-H4 heterotetramer and two H2A-H2B heterodimers. The octamer wraps approximately 147 bp of DNA. Monoubiquitination of Lys-119 gives a specific tag for epigenetic transcriptional repression. In terms of processing, phosphorylation of Ser-2 directly represses transcription.

Its subcellular location is the nucleus. It is found in the chromosome. Functionally, core component of nucleosome. Nucleosomes wrap and compact DNA into chromatin, limiting DNA accessibility to the cellular machineries which require DNA as a template. Histones thereby play a central role in transcription regulation, DNA repair, DNA replication and chromosomal stability. DNA accessibility is regulated via a complex set of post-translational modifications of histones, also called histone code, and nucleosome remodeling. This chain is Histone H2A, found in Paracentrotus lividus (Common sea urchin).